Reading from the N-terminus, the 545-residue chain is Glucose-6-phosphate isomerase (545 aa).

Residue glutamate 351 is the Proton donor of the active site. Residues histidine 382 and lysine 510 contribute to the active site.

This sequence belongs to the GPI family.

It is found in the cytoplasm. It catalyses the reaction alpha-D-glucose 6-phosphate = beta-D-fructose 6-phosphate. It functions in the pathway carbohydrate biosynthesis; gluconeogenesis. The protein operates within carbohydrate degradation; glycolysis; D-glyceraldehyde 3-phosphate and glycerone phosphate from D-glucose: step 2/4. Functionally, catalyzes the reversible isomerization of glucose-6-phosphate to fructose-6-phosphate. This chain is Glucose-6-phosphate isomerase, found in Shewanella frigidimarina (strain NCIMB 400).